Reading from the N-terminus, the 77-residue chain is Large ribosomal subunit protein bL28 (77 aa).

It belongs to the bacterial ribosomal protein bL28 family.

In Verminephrobacter eiseniae (strain EF01-2), this protein is Large ribosomal subunit protein bL28.